Consider the following 232-residue polypeptide: Fibrillarin-like rRNA/tRNA 2'-O-methyltransferase (232 aa).

Residues threonine 89–threonine 90, glutamate 108–phenylalanine 109, aspartate 133–alanine 134, and aspartate 153–glutamine 156 contribute to the S-adenosyl-L-methionine site.

This sequence belongs to the methyltransferase superfamily. Fibrillarin family. In terms of assembly, interacts with nop5. Component of box C/D small ribonucleoprotein (sRNP) particles that contain rpl7ae, FlpA and nop5, plus a guide RNA.

Involved in pre-rRNA and tRNA processing. Utilizes the methyl donor S-adenosyl-L-methionine to catalyze the site-specific 2'-hydroxyl methylation of ribose moieties in rRNA and tRNA. Site specificity is provided by a guide RNA that base pairs with the substrate. Methylation occurs at a characteristic distance from the sequence involved in base pairing with the guide RNA. The sequence is that of Fibrillarin-like rRNA/tRNA 2'-O-methyltransferase from Saccharolobus islandicus (strain L.S.2.15 / Lassen #1) (Sulfolobus islandicus).